A 344-amino-acid polypeptide reads, in one-letter code: tRNA N6-adenosine threonylcarbamoyltransferase (344 aa).

Histidine 113 and histidine 117 together coordinate Fe cation. Substrate is bound by residues 135 to 139, aspartate 169, glycine 182, aspartate 186, and asparagine 278; that span reads LVSGG. Residue aspartate 306 coordinates Fe cation. The interval 325–344 is disordered; it reads ESPISVGTDPSLSVETPQVF. Residues 326–344 are compositionally biased toward polar residues; sequence SPISVGTDPSLSVETPQVF.

The protein belongs to the KAE1 / TsaD family. It depends on Fe(2+) as a cofactor.

Its subcellular location is the cytoplasm. It carries out the reaction L-threonylcarbamoyladenylate + adenosine(37) in tRNA = N(6)-L-threonylcarbamoyladenosine(37) in tRNA + AMP + H(+). Required for the formation of a threonylcarbamoyl group on adenosine at position 37 (t(6)A37) in tRNAs that read codons beginning with adenine. Is involved in the transfer of the threonylcarbamoyl moiety of threonylcarbamoyl-AMP (TC-AMP) to the N6 group of A37, together with TsaE and TsaB. TsaD likely plays a direct catalytic role in this reaction. The sequence is that of tRNA N6-adenosine threonylcarbamoyltransferase from Corynebacterium glutamicum (strain ATCC 13032 / DSM 20300 / JCM 1318 / BCRC 11384 / CCUG 27702 / LMG 3730 / NBRC 12168 / NCIMB 10025 / NRRL B-2784 / 534).